Here is a 716-residue protein sequence, read N- to C-terminus: UvrABC system protein C (716 aa).

The 81-residue stretch at 14–94 (AEPGCYLMKD…IKRHRPRFNI (81 aa)) folds into the GIY-YIG domain. The 36-residue stretch at 206 to 241 (TELVERLHGRMDEAADALRFEDAARLRDQLQAVERS) folds into the UVR domain.

This sequence belongs to the UvrC family. Interacts with UvrB in an incision complex.

The protein localises to the cytoplasm. Its function is as follows. The UvrABC repair system catalyzes the recognition and processing of DNA lesions. UvrC both incises the 5' and 3' sides of the lesion. The N-terminal half is responsible for the 3' incision and the C-terminal half is responsible for the 5' incision. The protein is UvrABC system protein C of Anaeromyxobacter sp. (strain Fw109-5).